A 327-amino-acid chain; its full sequence is GMP reductase (327 aa).

Cysteine 176 functions as the Thioimidate intermediate in the catalytic mechanism. NADP(+) is bound at residue 205–228 (IIADGGIRTHGDIAKSIRFGASMV).

The protein belongs to the IMPDH/GMPR family. GuaC type 2 subfamily.

The catalysed reaction is IMP + NH4(+) + NADP(+) = GMP + NADPH + 2 H(+). Functionally, catalyzes the irreversible NADPH-dependent deamination of GMP to IMP. It functions in the conversion of nucleobase, nucleoside and nucleotide derivatives of G to A nucleotides, and in maintaining the intracellular balance of A and G nucleotides. This is GMP reductase from Streptococcus suis (strain 05ZYH33).